A 133-amino-acid chain; its full sequence is Large ribosomal subunit protein uL15 (133 aa).

Positions Met-1–Leu-57 are disordered. Residues Arg-21–Asn-35 are compositionally biased toward gly residues.

This sequence belongs to the universal ribosomal protein uL15 family. As to quaternary structure, part of the 50S ribosomal subunit.

Functionally, binds to the 23S rRNA. This is Large ribosomal subunit protein uL15 from Campylobacter concisus (strain 13826).